Reading from the N-terminus, the 303-residue chain is Glucosyl-3-phosphoglycerate synthase (303 aa).

Residues 35 to 39 (PALNE), Ser-66, Lys-99, and 119 to 120 (DS) contribute to the UDP-alpha-D-glucose site. Asp-121 contributes to the Mn(2+) binding site. 166-169 (GRVT) is a (2R)-3-phosphoglycerate binding site. UDP-alpha-D-glucose is bound by residues 211-214 (YGVE) and 238-243 (RAHRNR). Residue His-240 participates in Mn(2+) binding. Asn-242 is a (2R)-3-phosphoglycerate binding site.

It belongs to the glycosyltransferase 2 family. Homotrimer. Requires Mg(2+) as cofactor. Mn(2+) is required as a cofactor.

It catalyses the reaction an NDP-alpha-D-glucose + (2R)-3-phosphoglycerate = (2R)-2-O-(alpha-D-glucopyranosyl)-3-phospho-glycerate + a ribonucleoside 5'-diphosphate + H(+). The catalysed reaction is (2R)-3-phosphoglycerate + UDP-alpha-D-glucose = (2R)-2-O-(alpha-D-glucopyranosyl)-3-phospho-glycerate + UDP + H(+). The enzyme catalyses ADP-alpha-D-glucose + (2R)-3-phosphoglycerate = (2R)-2-O-(alpha-D-glucopyranosyl)-3-phospho-glycerate + ADP + H(+). It carries out the reaction GDP-D-glucose + (2R)-3-phosphoglycerate = (2R)-2-O-(alpha-D-glucopyranosyl)-3-phospho-glycerate + GDP + H(+). Involved in the biosynthesis of 6-O-methylglucose lipopolysaccarides (MGLPs). Catalyzes the transfer of the glucose moiety from a nuleotide sugar such as UDP-alpha-D-glucose to the position 2 of 3-phospho-D-glycerate (3-PGA) to form glucosyl-3-phosphoglycerate (GPG). It can use UDP-glucose, ADP-glucose and GDP-glucose as sugar donor substrates with decreasing affinity and with 3-PGA as an acceptor. D-glycerate can only be an acceptor with ADP-glucose and at a very low rate. This is Glucosyl-3-phosphoglycerate synthase (gpgS) from Mycolicibacterium smegmatis (strain ATCC 700084 / mc(2)155) (Mycobacterium smegmatis).